A 210-amino-acid polypeptide reads, in one-letter code: Large ribosomal subunit protein uL3 (210 aa).

The segment at 139 to 165 is disordered; that stretch reads AEKVHRSPGSIGHATFPGKVFKGKKMP.

The protein belongs to the universal ribosomal protein uL3 family. Part of the 50S ribosomal subunit. Forms a cluster with proteins L14 and L19.

Its function is as follows. One of the primary rRNA binding proteins, it binds directly near the 3'-end of the 23S rRNA, where it nucleates assembly of the 50S subunit. This is Large ribosomal subunit protein uL3 from Maridesulfovibrio salexigens (strain ATCC 14822 / DSM 2638 / NCIMB 8403 / VKM B-1763) (Desulfovibrio salexigens).